A 1012-amino-acid chain; its full sequence is Structural polyprotein (1012 aa).

Asp30 serves as a coordination point for a divalent metal cation. In terms of domain architecture, Peptidase S50 spans 514 to 755 (ADKGYEVVAN…AGRQFHLALA (242 aa)). Ser653 functions as the Nucleophile in the catalytic mechanism. Lys692 is an active-site residue. Residues 972–1012 (MKHRNPRRAPPKPKPKPNAPSQRPPGRLGRWIRTVSDEDLE) are disordered. The span at 975-986 (RNPRRAPPKPKP) shows a compositional bias: basic residues. The interval 1003 to 1012 (IRTVSDEDLE) is interaction with VP1 protein.

As to quaternary structure, homotrimer. A central divalent metal stabilizes the VP2 trimer. Interacts with host ITGA4/ITGB1. In terms of assembly, homodimer. Interacts (via C-terminus) with VP1 in the cytoplasm. Interacts with VP2. In terms of processing, specific enzymatic cleavages yield mature proteins. The capsid assembly seems to be regulated by polyprotein processing. The protease VP4 cleaves itself off the polyprotein, thus releasing pre-VP2 and VP3 within the infected cell. During capsid assembly, the C-terminus of pre-VP2 is further processed by VP4, giving rise to VP2, the external capsid protein and three small peptides that all stay closely associated with the capsid.

The protein localises to the virion. The protein resides in the host cytoplasm. Capsid protein VP2 self assembles to form an icosahedral capsid with a T=13 symmetry, about 70 nm in diameter, and consisting of 260 VP2 trimers. The capsid encapsulates the genomic dsRNA. VP2 is also involved in attachment and entry into the host cell by interacting with host ITGA4/ITGB1. Functionally, the precursor of VP2 plays an important role in capsid assembly. First, pre-VP2 and VP2 oligomers assemble to form a procapsid. Then, the pre-VP2 intermediates may be processed into VP2 proteins by proteolytic cleavage mediated by VP4 to obtain the mature virion. The final capsid is composed of pentamers and hexamers but VP2 has a natural tendency to assemble into all-pentameric structures. Therefore pre-VP2 may be required to allow formation of the hexameric structures. In terms of biological role, protease VP4 is a serine protease that cleaves the polyprotein into its final products. Pre-VP2 is first partially cleaved, and may be completely processed by VP4 upon capsid maturation. Its function is as follows. Capsid protein VP3 plays a key role in virion assembly by providing a scaffold for the capsid made of VP2. May self-assemble to form a T=4-like icosahedral inner-capsid composed of at least 180 trimers. Plays a role in genomic RNA packaging by recruiting VP1 into the capsid and interacting with the dsRNA genome segments to form a ribonucleoprotein complex. Additionally, the interaction of the VP3 C-terminal tail with VP1 removes the inherent structural blockade of the polymerase active site. Thus, VP3 can also function as a transcriptional activator. Structural peptide 1 is a small peptide derived from pre-VP2 C-terminus. It destabilizes and perforates cell membranes, suggesting a role during entry. Functionally, structural peptide 2 is a small peptide derived from pVP2 C-terminus. It is not essential for the virus viability, but viral growth is affected when missing. In terms of biological role, structural peptide 3 is a small peptide derived from pVP2 C-terminus. It is not essential for the virus viability, but viral growth is affected when missing. Its function is as follows. Structural peptide 4 is a small peptide derived from pVP2 C-terminus. It is essential for the virus viability. This is Structural polyprotein from Gallus gallus (Chicken).